A 413-amino-acid chain; its full sequence is Multifunctional CCA protein (413 aa).

ATP is bound by residues Gly8 and Arg11. The CTP site is built by Gly8 and Arg11. Mg(2+) is bound by residues Asp21 and Asp23. Positions 91, 137, and 140 each coordinate ATP. CTP contacts are provided by Arg91, Arg137, and Arg140. Residues 225–326 (TGVHVMMVID…ANLLQGVDAY (102 aa)) enclose the HD domain.

It belongs to the tRNA nucleotidyltransferase/poly(A) polymerase family. Bacterial CCA-adding enzyme type 1 subfamily. As to quaternary structure, monomer. Can also form homodimers and oligomers. It depends on Mg(2+) as a cofactor. Ni(2+) serves as cofactor.

The enzyme catalyses a tRNA precursor + 2 CTP + ATP = a tRNA with a 3' CCA end + 3 diphosphate. It carries out the reaction a tRNA with a 3' CCA end + 2 CTP + ATP = a tRNA with a 3' CCACCA end + 3 diphosphate. Its function is as follows. Catalyzes the addition and repair of the essential 3'-terminal CCA sequence in tRNAs without using a nucleic acid template. Adds these three nucleotides in the order of C, C, and A to the tRNA nucleotide-73, using CTP and ATP as substrates and producing inorganic pyrophosphate. tRNA 3'-terminal CCA addition is required both for tRNA processing and repair. Also involved in tRNA surveillance by mediating tandem CCA addition to generate a CCACCA at the 3' terminus of unstable tRNAs. While stable tRNAs receive only 3'-terminal CCA, unstable tRNAs are marked with CCACCA and rapidly degraded. The polypeptide is Multifunctional CCA protein (Nitrosospira multiformis (strain ATCC 25196 / NCIMB 11849 / C 71)).